A 328-amino-acid polypeptide reads, in one-letter code: Phosphate acyltransferase (328 aa).

This sequence belongs to the PlsX family. In terms of assembly, homodimer. Probably interacts with PlsY.

Its subcellular location is the cytoplasm. The catalysed reaction is a fatty acyl-[ACP] + phosphate = an acyl phosphate + holo-[ACP]. It functions in the pathway lipid metabolism; phospholipid metabolism. In terms of biological role, catalyzes the reversible formation of acyl-phosphate (acyl-PO(4)) from acyl-[acyl-carrier-protein] (acyl-ACP). This enzyme utilizes acyl-ACP as fatty acyl donor, but not acyl-CoA. This is Phosphate acyltransferase from Staphylococcus aureus (strain MRSA252).